An 891-amino-acid chain; its full sequence is Alanine--tRNA ligase (891 aa).

Residues His574, His578, Cys676, and His680 each coordinate Zn(2+).

It belongs to the class-II aminoacyl-tRNA synthetase family. Requires Zn(2+) as cofactor.

It is found in the cytoplasm. The enzyme catalyses tRNA(Ala) + L-alanine + ATP = L-alanyl-tRNA(Ala) + AMP + diphosphate. Its function is as follows. Catalyzes the attachment of alanine to tRNA(Ala) in a two-step reaction: alanine is first activated by ATP to form Ala-AMP and then transferred to the acceptor end of tRNA(Ala). Also edits incorrectly charged Ser-tRNA(Ala) and Gly-tRNA(Ala) via its editing domain. This Synechococcus sp. (strain WH7803) protein is Alanine--tRNA ligase.